The sequence spans 355 residues: uncharacterized protein (355 aa).

The protein belongs to the TmcAL family.

This is an uncharacterized protein from Methanocaldococcus jannaschii (strain ATCC 43067 / DSM 2661 / JAL-1 / JCM 10045 / NBRC 100440) (Methanococcus jannaschii).